We begin with the raw amino-acid sequence, 193 residues long: Flagellar transcriptional regulator FlhC (193 aa).

Residues cysteine 138, cysteine 141, cysteine 158, and cysteine 161 each contribute to the Zn(2+) site.

This sequence belongs to the FlhC family. Heterohexamer composed of two FlhC and four FlhD subunits. Each FlhC binds a FlhD dimer, forming a heterotrimer, and a hexamer assembles by dimerization of two heterotrimers. It depends on Zn(2+) as a cofactor.

Its subcellular location is the cytoplasm. Functions in complex with FlhD as a master transcriptional regulator that regulates transcription of several flagellar and non-flagellar operons by binding to their promoter region. Activates expression of class 2 flagellar genes, including fliA, which is a flagellum-specific sigma factor that turns on the class 3 genes. Also regulates genes whose products function in a variety of physiological pathways. This chain is Flagellar transcriptional regulator FlhC, found in Yersinia enterocolitica.